Consider the following 374-residue polypeptide: 4-galactosyl-N-acetylglucosaminide 3-alpha-L-fucosyltransferase FUT5 (374 aa).

Over 1-15 (MDPLGPAKPQWLWRR) the chain is Cytoplasmic. A helical; Signal-anchor for type II membrane protein transmembrane segment spans residues 16–34 (CLAGLLFQLLVAVCFFSYL). Residues 35–374 (RVSRDDATGS…TVRSIAAWFT (340 aa)) lie on the Lumenal side of the membrane. N-linked (GlcNAc...) asparagine glycosylation is found at N60, N105, N167, and N198.

This sequence belongs to the glycosyltransferase 10 family. In terms of tissue distribution, liver, colon and testis and trace amounts in T-cells and brain.

Its subcellular location is the golgi apparatus. It localises to the golgi stack membrane. It catalyses the reaction a beta-D-galactosyl-(1-&gt;3)-N-acetyl-beta-D-glucosaminyl derivative + GDP-beta-L-fucose = a beta-D-galactosyl-(1-&gt;3)-[alpha-L-fucosyl-(1-&gt;4)]-N-acetyl-beta-D-glucosaminyl derivative + GDP + H(+). The catalysed reaction is an N-acetyl-alpha-neuraminyl-(2-&gt;3)-beta-D-galactosyl-(1-&gt;4)-N-acetyl-beta-D-glucosaminyl derivative + GDP-beta-L-fucose = an alpha-Neu5Ac-(2-&gt;3)-beta-D-Gal-(1-&gt;4)-[alpha-L-Fuc-(1-&gt;3)]-beta-D-GlcNAc derivative + GDP + H(+). The enzyme catalyses an alpha-Neu5Ac-(2-&gt;3)-beta-D-Gal-(1-&gt;4)-beta-D-GlcNAc-(1-&gt;3)-beta-D-Gal-(1-&gt;4)-[alpha-L-Fuc-(1-&gt;3)]-beta-D-GlcNAc derivative + GDP-beta-L-fucose = an alpha-Neu5Ac-(2-&gt;3)-beta-D-Gal-(1-&gt;4)-[alpha-L-Fuc-(1-&gt;3)]-beta-D-GlcNAc-(1-&gt;3)-beta-D-Gal-(1-&gt;4)-[alpha-L-Fuc-(1-&gt;3)]-beta-D-GlcNAc derivative + GDP + H(+). It carries out the reaction a beta-D-galactosyl-(1-&gt;4)-N-acetyl-beta-D-glucosaminyl derivative + GDP-beta-L-fucose = a beta-D-galactosyl-(1-&gt;4)-[alpha-L-fucosyl-(1-&gt;3)]-N-acetyl-beta-D-glucosaminyl derivative + GDP + H(+). It catalyses the reaction a neolactoside nLc4Cer + GDP-beta-L-fucose = a neolactoside III(3)-alpha-Fuc-nLc4Cer + GDP + H(+). The catalysed reaction is a neolactoside nLc6Cer + GDP-beta-L-fucose = beta-D-galactosyl-(1-&gt;4)-N-acetyl-beta-D-glucosaminyl-(1-&gt;3)-beta-D-galactosyl-(1-&gt;4)-[alpha-L-fucosyl-(1-&gt;3)]-N-acetyl-beta-D-glucosaminyl-(1-&gt;3)-beta-D-galactosyl-(1-&gt;4)-beta-D-glucosyl-(1&lt;-&gt;1')-ceramide + GDP + H(+). The enzyme catalyses a neolactoside nLc6Cer(d18:1(4E)) + GDP-beta-L-fucose = a neolactoside III(3)-alpha-Fuc-nLc6Cer(d18:1(4E)) + GDP + H(+). It carries out the reaction a neolactoside nLc4Cer(d18:1(4E)) + GDP-beta-L-fucose = a neolactoside III(3)-alpha-Fuc-nLc4Cer(d18:1(4E)) + GDP + H(+). It catalyses the reaction a neolactoside VI(3)-alpha-NeuNAc-nLc6Cer + GDP-beta-L-fucose = a neolactoside VI(3)-alpha-NeuAc,III(3)-alphaFuc-nLc6Cer + GDP + H(+). The catalysed reaction is beta-D-galactosyl-(1-&gt;4)-N-acetyl-D-glucosamine + GDP-beta-L-fucose = beta-D-galactosyl-(1-&gt;4)-[alpha-L-fucosyl-(1-&gt;3)]-N-acetyl-D-glucosamine + GDP + H(+). The enzyme catalyses N-acetyl-alpha-neuraminosyl-(2-&gt;3)-beta-D-galactosyl-(1-&gt;4)-N-acetyl-beta-D-glucosamine + GDP-beta-L-fucose = N-acetyl-alpha-neuraminosyl-(2-&gt;3)-beta-D-galactosyl-(1-&gt;4)-[alpha-L-fucosyl-(1-&gt;3)]-N-acetyl-beta-D-glucosamine + GDP + H(+). It carries out the reaction alpha-L-Fuc-(1-&gt;2)-beta-D-Gal-(1-&gt;4)-D-GlcNAc + GDP-beta-L-fucose = alpha-L-Fuc-(1-&gt;2)-beta-D-Gal-(1-&gt;4)-[alpha-L-Fuc-(1-&gt;3)]-D-GlcNAc + GDP + H(+). It catalyses the reaction an alpha-Neu5Ac-(2-&gt;3)-beta-D-Gal-(1-&gt;3)-D-GlcNAc derivative + GDP-beta-L-fucose = an alpha-Neu5Ac-(2-&gt;3)-beta-D-Gal-(1-&gt;3)-[alpha-L-Fuc-(1-&gt;4)]-beta-D-GlcNAc derivative + GDP + H(+). The protein operates within protein modification; protein glycosylation. Functionally, catalyzes preferentially the transfer of L-fucose, from a guanosine diphosphate-beta-L-fucose, to the N-acetyl-beta-D-glucosamine (GlcNAc) of an N-acetyllactosamine unit (type 2 chain) of an oligosaccharide, or a glycoprotein- and a glycolipid-linked N-acetyllactosamine unit via an alpha (1,3) linkage and participates in the surface expression of VIM-2, Lewis X/SSEA-1 and sialyl Lewis X antigens. Preferentially transfers fucose to the GlcNAc of an internal N-acetyllactosamine unit of a poly-N-acetyllactosamine chain acceptor substrate. Also catalyzes to a lesser extend the transfer of L-fucose to the GlcNAc of a type 1 (beta-D-galactosyl-(1-&gt;3)-N-acetyl-beta-D-glucosaminyl) or H-type 1 (alpha-L-Fuc-(1-&gt;2)-beta-D-Gal-(1-&gt;3)-D-GlcNAc) chain oligosaccharide via an alpha (1,4) linkage. Preferentially catalyzes sialylated type 2 oligosaccharide acceptors over neutral type 2 or H type 2 (alpha-L-Fuc-(1-&gt;2)-beta-D-Gal-(1-&gt;4)-D-GlcNAc) oligosaccharide acceptors. Lactose-based structures are also acceptor substrates. The protein is 4-galactosyl-N-acetylglucosaminide 3-alpha-L-fucosyltransferase FUT5 of Homo sapiens (Human).